Consider the following 438-residue polypeptide: GTPase Der (438 aa).

EngA-type G domains are found at residues 4 to 168 (PIVA…PEGN) and 177 to 352 (IRIA…GNYC). Residues 10–17 (GRPNVGKS), 57–61 (DTGGI), 120–123 (NKID), 183–190 (GRPNVGKS), 230–234 (DTAGL), and 295–298 (NKWD) each bind GTP. One can recognise a KH-like domain in the interval 353-437 (KRIKTGILND…GIKLEFRERK (85 aa)).

This sequence belongs to the TRAFAC class TrmE-Era-EngA-EngB-Septin-like GTPase superfamily. EngA (Der) GTPase family. As to quaternary structure, associates with the 50S ribosomal subunit.

GTPase that plays an essential role in the late steps of ribosome biogenesis. The polypeptide is GTPase Der (Clostridium novyi (strain NT)).